Reading from the N-terminus, the 130-residue chain is Small ribosomal subunit protein uS11 (130 aa).

Belongs to the universal ribosomal protein uS11 family. Part of the 30S ribosomal subunit. Interacts with proteins S7 and S18. Binds to IF-3.

Its function is as follows. Located on the platform of the 30S subunit, it bridges several disparate RNA helices of the 16S rRNA. Forms part of the Shine-Dalgarno cleft in the 70S ribosome. This is Small ribosomal subunit protein uS11 from Parasynechococcus marenigrum (strain WH8102).